Reading from the N-terminus, the 827-residue chain is Rho GTPase-activating protein 6 (827 aa).

The PH domain occupies 18-125 (TVYKSGPLFI…WKAALEQALA (108 aa)). Residues 172 to 371 (LALEEIDGSP…ALLEDYGNMI (200 aa)) enclose the Rho-GAP domain. Disordered regions lie at residues 379–437 (CSTS…SDYA) and 517–561 (YTTS…SSGN). Residues 401-412 (IVVKHPDLHTLD) show a composition bias toward basic and acidic residues. A compositionally biased stretch (acidic residues) spans 413 to 423 (IEEGETDDDND). Over residues 517 to 543 (YTTSAEKPASKTTGSSTVNSKRSSSWG) the composition is skewed to polar residues. Residues 560-684 (GNDELLIQRL…HQLSQQRQHH (125 aa)) adopt a coiled-coil conformation.

Functionally, acts as a GTPase activator for the Rac-type GTPase by converting it to an inactive GDP-bound state. This chain is Rho GTPase-activating protein 6 (ROPGAP6), found in Arabidopsis thaliana (Mouse-ear cress).